The chain runs to 739 residues: MLKKQPLSPTDVRDSKVYRDWGLTDAEYQLLTDKVLQRLPNETETGLFSGMWSEHCSYKNSKPVLKKFWTQGEQVLEGPGEGAGIIDIGDGQAVVFKAESHNHPSAVEPYEGAATGVGGIIRDIFSMGARPIALLDSLRFGEPTDAHTKYLISQVVAGIGGYGNCIGIPTIGGDTVFDASYQKNPLVNAMCVGILDQADIQKGQATGIGNAVIYVGAKTGRDGINGASFASAEFNDANETQRSAVQVGDPFMEKLLMEACLEVIHEHRDVLIGIQDMGAAGLVSSSAEMASKAGSGLSLNLDLVPQRETGMTPFELMLSESQERMLLCVKAGAEAEIYQVFEKYGLDAVTIGKVTAGHQYQLFHHGKLVADVPVDALATKAPVYEREKKRPTRLNHQSHHQFMPRLVDATGTLKKMLQQPTIASKASLYGTYDSQVQTNTVVKPGSDAGVIRIRHTDKALAVTTDVNGRYLYLNPRVGGEIAVAEAARNIVASGGQPLGITDCLNYGNPEKPEQFYDLDESAMGIARACQLFNTPVISGNVSLNNESNGEAIYPTPMIGMVGLIKHQKDITTSDFKHAGDAVYVLGTTEADFNGSELQKMLTGTISGELFDFDLVTENRNQRLLLTAIQKGLVASAHDVSEGGLITTIAESCFPQNIGVELASDLPAANFFAETQSRFVISVTPAQQAAFESLMEPYVTYLGRTTATDRLHVQTADQAFDIKVSFAKQLWEGALPCLLK.

His55 is a catalytic residue. ATP contacts are provided by Tyr58 and Lys97. Glu99 contributes to the Mg(2+) binding site. Substrate-binding positions include Ser100–His103 and Arg122. His101 (proton acceptor) is an active-site residue. Mg(2+) is bound at residue Asp123. Gln246 serves as a coordination point for substrate. Residue Asp276 participates in Mg(2+) binding. Glu320 to Gln322 contributes to the substrate binding site. Residues Asp502 and Gly539 each contribute to the ATP site. Asn540 contacts Mg(2+). Ser542 lines the substrate pocket.

Belongs to the FGAMS family. As to quaternary structure, monomer. Part of the FGAM synthase complex composed of 1 PurL, 1 PurQ and 2 PurS subunits.

It localises to the cytoplasm. The catalysed reaction is N(2)-formyl-N(1)-(5-phospho-beta-D-ribosyl)glycinamide + L-glutamine + ATP + H2O = 2-formamido-N(1)-(5-O-phospho-beta-D-ribosyl)acetamidine + L-glutamate + ADP + phosphate + H(+). It functions in the pathway purine metabolism; IMP biosynthesis via de novo pathway; 5-amino-1-(5-phospho-D-ribosyl)imidazole from N(2)-formyl-N(1)-(5-phospho-D-ribosyl)glycinamide: step 1/2. Part of the phosphoribosylformylglycinamidine synthase complex involved in the purines biosynthetic pathway. Catalyzes the ATP-dependent conversion of formylglycinamide ribonucleotide (FGAR) and glutamine to yield formylglycinamidine ribonucleotide (FGAM) and glutamate. The FGAM synthase complex is composed of three subunits. PurQ produces an ammonia molecule by converting glutamine to glutamate. PurL transfers the ammonia molecule to FGAR to form FGAM in an ATP-dependent manner. PurS interacts with PurQ and PurL and is thought to assist in the transfer of the ammonia molecule from PurQ to PurL. The polypeptide is Phosphoribosylformylglycinamidine synthase subunit PurL (Lactiplantibacillus plantarum (strain ATCC BAA-793 / NCIMB 8826 / WCFS1) (Lactobacillus plantarum)).